A 261-amino-acid polypeptide reads, in one-letter code: Proteasome subunit beta type-2 (261 aa).

The propeptide at 1–29 is removed in mature form; the sequence is MAGLSFDNYQRNNFLAENSHTQPKATSTG. Residue Thr-30 is the Nucleophile of the active site.

It belongs to the peptidase T1B family. In terms of assembly, the 26S proteasome consists of a 20S proteasome core and two 19S regulatory subunits. The 20S proteasome core is composed of 28 subunits that are arranged in four stacked rings, resulting in a barrel-shaped structure. The two end rings are each formed by seven alpha subunits, and the two central rings are each formed by seven beta subunits. The catalytic chamber with the active sites is on the inside of the barrel.

It localises to the cytoplasm. Its subcellular location is the nucleus. It carries out the reaction Cleavage of peptide bonds with very broad specificity.. The proteasome degrades poly-ubiquitinated proteins in the cytoplasm and in the nucleus. It is essential for the regulated turnover of proteins and for the removal of misfolded proteins. The proteasome is a multicatalytic proteinase complex that is characterized by its ability to cleave peptides with Arg, Phe, Tyr, Leu, and Glu adjacent to the leaving group at neutral or slightly basic pH. It has an ATP-dependent proteolytic activity. The chain is Proteasome subunit beta type-2 (PUP1) from Saccharomyces cerevisiae (strain ATCC 204508 / S288c) (Baker's yeast).